The sequence spans 397 residues: Digeranylgeranylglycerophospholipid reductase (397 aa).

FAD is bound by residues alanine 15, glutamate 34, cysteine 45, glycine 46, glycine 48, arginine 101, alanine 125, glutamate 163, aspartate 284, glycine 296, and isoleucine 297. A 2,3-bis-O-(geranylgeranyl)-sn-glycerol 1-phospholipid is bound by residues lysine 339 and valine 375.

This sequence belongs to the geranylgeranyl reductase family. DGGGPL reductase subfamily. It depends on FAD as a cofactor.

It catalyses the reaction 2,3-bis-O-(phytanyl)-sn-glycerol 1-phosphate + 8 NADP(+) = 2,3-bis-O-(geranylgeranyl)-sn-glycerol 1-phosphate + 8 NADPH + 8 H(+). The catalysed reaction is 2,3-bis-O-(phytanyl)-sn-glycerol 1-phosphate + 8 NAD(+) = 2,3-bis-O-(geranylgeranyl)-sn-glycerol 1-phosphate + 8 NADH + 8 H(+). The enzyme catalyses a 2,3-bis-O-phytanyl-sn-glycerol 1-phospholipid + 8 A = a 2,3-bis-O-(geranylgeranyl)-sn-glycerol 1-phospholipid + 8 AH2. It carries out the reaction CDP-2,3-bis-O-(geranylgeranyl)-sn-glycerol + 8 AH2 = CDP-2,3-bis-O-(phytanyl)-sn-glycerol + 8 A. It catalyses the reaction archaetidylserine + 8 AH2 = 2,3-bis-O-phytanyl-sn-glycero-3-phospho-L-serine + 8 A. It participates in membrane lipid metabolism; glycerophospholipid metabolism. Functionally, is involved in the reduction of 2,3-digeranylgeranylglycerophospholipids (unsaturated archaeols) into 2,3-diphytanylglycerophospholipids (saturated archaeols) in the biosynthesis of archaeal membrane lipids. Catalyzes the formation of archaetidic acid (2,3-di-O-phytanyl-sn-glyceryl phosphate) from 2,3-di-O-geranylgeranylglyceryl phosphate (DGGGP) via the hydrogenation of each double bond of the isoprenoid chains. Is also probably able to reduce double bonds of geranyl groups in CDP-2,3-bis-O-(geranylgeranyl)-sn-glycerol and archaetidylserine, thus acting at various stages in the biosynthesis of archaeal membrane lipids. This is Digeranylgeranylglycerophospholipid reductase from Picrophilus torridus (strain ATCC 700027 / DSM 9790 / JCM 10055 / NBRC 100828 / KAW 2/3).